The chain runs to 129 residues: MKSLQFCFLFCCWKAICCNSCELTNITITVEKEECNFCISINTTWCAGYCYTRDLVYKDPARPNIQKTCTFKELVYETVKVPGCAHHADSLYTYPVATECHCGKCDSDSTDCTVRGLGPSYCSFSEMKE.

The N-terminal stretch at 1–20 (MKSLQFCFLFCCWKAICCNS) is a signal peptide. Intrachain disulfides connect Cys-21–Cys-69, Cys-35–Cys-84, Cys-38–Cys-122, Cys-46–Cys-100, Cys-50–Cys-102, and Cys-105–Cys-112. N-linked (GlcNAc...) asparagine glycosylation is found at Asn-25 and Asn-42.

The protein belongs to the glycoprotein hormones subunit beta family. As to quaternary structure, heterodimer. The active follitropin is a heterodimer composed of an alpha chain/CGA shared with other hormones and a unique beta chain/FSHB shown here.

The protein resides in the secreted. Together with the alpha chain CGA constitutes follitropin, the follicle-stimulating hormone, and provides its biological specificity to the hormone heterodimer. Binds FSHR, a G protein-coupled receptor, on target cells to activate downstream signaling pathways. Follitropin is involved in follicle development and spermatogenesis in reproductive organs. The protein is Follitropin subunit beta (FSHB) of Sus scrofa (Pig).